Reading from the N-terminus, the 377-residue chain is All-trans-retinol dehydrogenase [NAD(+)] ADH4 (377 aa).

Cysteine 47 is a binding site for Zn(2+). An NAD(+)-binding site is contributed by threonine 49. Positions 68, 98, 101, 104, 112, and 179 each coordinate Zn(2+). NAD(+) is bound by residues 204 to 209, aspartate 228, lysine 233, 297 to 299, 320 to 322, and arginine 372; these read GLGCVG, VGA, and TFF.

This sequence belongs to the zinc-containing alcohol dehydrogenase family. Class-II subfamily. As to quaternary structure, dimer. It depends on Zn(2+) as a cofactor. Liver specific.

The protein resides in the cytoplasm. The enzyme catalyses all-trans-retinol + NAD(+) = all-trans-retinal + NADH + H(+). The catalysed reaction is 9-cis-retinol + NAD(+) = 9-cis-retinal + NADH + H(+). It carries out the reaction 20-hydroxy-(5Z,8Z,11Z,14Z)-eicosatetraenoate + NAD(+) = 20-oxo-(5Z,8Z,11Z,14Z)-eicosatetraenoate + NADH + H(+). It catalyses the reaction 20-oxo-(5Z,8Z,11Z,14Z)-eicosatetraenoate + NAD(+) + H2O = (5Z,8Z,11Z,14Z)-eicosatetraenedioate + NADH + 2 H(+). The enzyme catalyses 1,4-benzoquinone + NADH + H(+) = hydroquinone + NAD(+). With respect to regulation, oxidation of 20-HETE is inhibited by low concentrations of N-heptylformamide. Oxidation of 20-HETE is a decreased by 55-65% by either all-trans-retinol or all-trans-retinoic acid. Strongly inhibited by omega-hydroxy fatty acids. Catalyzes the NAD-dependent oxidation of either all-trans-retinol or 9-cis-retinol. Also oxidizes long chain omega-hydroxy fatty acids, such as 20-HETE, producing both the intermediate aldehyde, 20-oxoarachidonate and the end product, a dicarboxylic acid, (5Z,8Z,11Z,14Z)-eicosatetraenedioate. Also catalyzes the reduction of benzoquinones. This Mus musculus (Mouse) protein is All-trans-retinol dehydrogenase [NAD(+)] ADH4.